The primary structure comprises 381 residues: Probable tRNA sulfurtransferase (381 aa).

One can recognise a THUMP domain in the interval R60–K168. ATP-binding positions include L186 to L187, K269, G291, and Q300.

Belongs to the ThiI family.

It localises to the cytoplasm. The catalysed reaction is [ThiI sulfur-carrier protein]-S-sulfanyl-L-cysteine + a uridine in tRNA + 2 reduced [2Fe-2S]-[ferredoxin] + ATP + H(+) = [ThiI sulfur-carrier protein]-L-cysteine + a 4-thiouridine in tRNA + 2 oxidized [2Fe-2S]-[ferredoxin] + AMP + diphosphate. It catalyses the reaction [ThiS sulfur-carrier protein]-C-terminal Gly-Gly-AMP + S-sulfanyl-L-cysteinyl-[cysteine desulfurase] + AH2 = [ThiS sulfur-carrier protein]-C-terminal-Gly-aminoethanethioate + L-cysteinyl-[cysteine desulfurase] + A + AMP + 2 H(+). The protein operates within cofactor biosynthesis; thiamine diphosphate biosynthesis. Catalyzes the ATP-dependent transfer of a sulfur to tRNA to produce 4-thiouridine in position 8 of tRNAs, which functions as a near-UV photosensor. Also catalyzes the transfer of sulfur to the sulfur carrier protein ThiS, forming ThiS-thiocarboxylate. This is a step in the synthesis of thiazole, in the thiamine biosynthesis pathway. The sulfur is donated as persulfide by IscS. The sequence is that of Probable tRNA sulfurtransferase from Thermococcus kodakarensis (strain ATCC BAA-918 / JCM 12380 / KOD1) (Pyrococcus kodakaraensis (strain KOD1)).